The chain runs to 189 residues: Potassium-transporting ATPase KdpC subunit (189 aa).

A helical transmembrane segment spans residues 6 to 26; the sequence is PAILFFIVFTILCGGVYPAVV.

Belongs to the KdpC family. As to quaternary structure, the system is composed of three essential subunits: KdpA, KdpB and KdpC.

Its subcellular location is the cell inner membrane. Part of the high-affinity ATP-driven potassium transport (or Kdp) system, which catalyzes the hydrolysis of ATP coupled with the electrogenic transport of potassium into the cytoplasm. This subunit acts as a catalytic chaperone that increases the ATP-binding affinity of the ATP-hydrolyzing subunit KdpB by the formation of a transient KdpB/KdpC/ATP ternary complex. This chain is Potassium-transporting ATPase KdpC subunit, found in Geotalea uraniireducens (strain Rf4) (Geobacter uraniireducens).